The following is a 132-amino-acid chain: Glycine cleavage system H protein (132 aa).

The Lipoyl-binding domain occupies 24 to 106; sequence TVRVGITDFA…YGAGWLLDVQ (83 aa). The residue at position 65 (K65) is an N6-lipoyllysine.

This sequence belongs to the GcvH family. As to quaternary structure, the glycine cleavage system is composed of four proteins: P, T, L and H. The cofactor is (R)-lipoate.

The glycine cleavage system catalyzes the degradation of glycine. The H protein shuttles the methylamine group of glycine from the P protein to the T protein. In Mycobacterium avium (strain 104), this protein is Glycine cleavage system H protein.